We begin with the raw amino-acid sequence, 390 residues long: Protein AC109 (390 aa).

It localises to the host cytoplasm. The protein resides in the host nucleus. Its function is as follows. Plays a role in the transport of the budded virion (BV) to the host nucleus and for occlusion of viral progeny. The protein is Protein AC109 (ORF109) of Lepidoptera (butterflies and moths).